A 304-amino-acid polypeptide reads, in one-letter code: Homoserine O-acetyltransferase (304 aa).

Catalysis depends on Cys142, which acts as the Acyl-thioester intermediate. 2 residues coordinate substrate: Lys163 and Ser191. Residue His234 is the Proton acceptor of the active site. Glu236 is a catalytic residue. Arg248 is a binding site for substrate.

Belongs to the MetA family.

It localises to the cytoplasm. The enzyme catalyses L-homoserine + acetyl-CoA = O-acetyl-L-homoserine + CoA. It functions in the pathway amino-acid biosynthesis; L-methionine biosynthesis via de novo pathway; O-acetyl-L-homoserine from L-homoserine: step 1/1. Transfers an acetyl group from acetyl-CoA to L-homoserine, forming acetyl-L-homoserine. The polypeptide is Homoserine O-acetyltransferase (Thermotoga petrophila (strain ATCC BAA-488 / DSM 13995 / JCM 10881 / RKU-1)).